The sequence spans 796 residues: Histone-lysine N-methyltransferase PRDM9 (796 aa).

Residues 1–23 are disordered; the sequence is MSRTMNTNKPEENSTEGDAGKLE. In terms of domain architecture, KRAB-related spans 27–90; it reads KVKDEFKDIS…QRQAIKPQIN (64 aa). The interval 149 to 172 is disordered; the sequence is SEHAQKPVCSPEEGNTSGQHFGKK. Zn(2+)-binding residues include Cys-209, Cys-212, Cys-220, and His-223. In terms of domain architecture, SET spans 248–362; it reads PGLRIGPSGI…PGRELLVWYG (115 aa). S-adenosyl-L-methionine contacts are provided by residues 260–262, Tyr-295, and 324–325; these read AGL and NC. 292–298 is a substrate binding site; it reads NSGYSWL. Tyr-361 contacts substrate. N6,N6,N6-trimethyllysine; alternate is present on Lys-372. Position 372 is an N6-methyllysine; alternate (Lys-372). N6-methyllysine is present on residues Lys-376 and Lys-378. The segment at 392 to 415 adopts a C2H2-type 1 zinc-finger fold; the sequence is HPCFLCSLAFSSQKFLTQHVEWNH. 4 residues coordinate Zn(2+): Cys-394, Cys-397, His-410, and His-415. A compositionally biased stretch (basic and acidic residues) spans 443 to 457; that stretch reads FDSQNKNDKASNEVK. The segment at 443–497 is disordered; that stretch reads FDSQNKNDKASNEVKRKSKPRHKWTRQRISTAFSSTLKEQMRSEESKRTVEEELR. The span at 458–468 shows a compositional bias: basic residues; that stretch reads RKSKPRHKWTR. Polar residues predominate over residues 469 to 480; the sequence is QRISTAFSSTLK. The span at 481-497 shows a compositional bias: basic and acidic residues; sequence EQMRSEESKRTVEEELR. A C2H2-type 2; degenerate zinc finger spans residues 522 to 540; sequence QCGQCFSDKSNVSEHQRTH. 9 C2H2-type zinc fingers span residues 546–568, 574–596, 602–624, 630–652, 658–680, 686–708, 714–736, 742–764, and 770–792; these read YICR…QRTH and YICR…LRTH. Residues Cys-716, Cys-719, His-732, His-736, Cys-744, Cys-747, His-760, His-764, Cys-772, Cys-775, His-788, and His-792 each coordinate Zn(2+).

It belongs to the class V-like SAM-binding methyltransferase superfamily. In terms of assembly, homodimer. Interacts with EHMT2 and CDYL; interaction only takes place when PRDM9 is bound to hotspot DNA. Interacts with CXXC1; this interaction does not link PRDM9-activated recombination hotspot sites with DSB machinery and is not required for the hotspot recognition pathway. Forms a complex with EWSR1, REC8, SYCP3 and SYCP1; complex formation is dependent of phosphorylated form of REC8 and requires PRDM9 bound to hotspot DNA; EWSR1 joins PRDM9 with the chromosomal axis through REC8. Post-translationally, mono-methylated; automethylated. Tri-methylated; automethylated. Mono-methylation is predominant; automethylation is lower and slower than H3 peptide methylation and is in a highest S-adenosyl-L-methionine concentration-dependent. There are two major sites for automethylation at Lys-372 and Lys-378. Lysines can be simultaneously methylated, such as Lys-372(me3)/Lys-376(me1), Lys-372(me1)/Lys-378(me1) and Lys-372(me1)/Lys-376(me1)/Lys-378(me1). Automethylation is an intramolecular (cis) process.

It is found in the nucleus. It localises to the chromosome. It catalyses the reaction L-lysyl-[protein] + S-adenosyl-L-methionine = N(6)-methyl-L-lysyl-[protein] + S-adenosyl-L-homocysteine + H(+). The catalysed reaction is N(6)-methyl-L-lysyl-[protein] + S-adenosyl-L-methionine = N(6),N(6)-dimethyl-L-lysyl-[protein] + S-adenosyl-L-homocysteine + H(+). The enzyme catalyses L-lysyl(4)-[histone H3] + 3 S-adenosyl-L-methionine = N(6),N(6),N(6)-trimethyl-L-lysyl(4)-[histone H3] + 3 S-adenosyl-L-homocysteine + 3 H(+). It carries out the reaction L-lysyl(36)-[histone H3] + 3 S-adenosyl-L-methionine = N(6),N(6),N(6)-trimethyl-L-lysyl(36)-[histone H3] + 3 S-adenosyl-L-homocysteine + 3 H(+). It catalyses the reaction L-lysyl(9)-[histone H3] + 3 S-adenosyl-L-methionine = N(6),N(6),N(6)-trimethyl-L-lysyl(9)-[histone H3] + 3 S-adenosyl-L-homocysteine + 3 H(+). The catalysed reaction is L-lysyl(20)-[histone H4] + S-adenosyl-L-methionine = N(6)-methyl-L-lysyl(20)-[histone H4] + S-adenosyl-L-homocysteine + H(+). The enzyme catalyses N(6)-methyl-L-lysyl(20)-[histone H4] + S-adenosyl-L-methionine = N(6),N(6)-dimethyl-L-lysyl(20)-[histone H4] + S-adenosyl-L-homocysteine + H(+). Histone methyltransferase that sequentially mono-, di-, and tri-methylates both 'Lys-4' (H3K4) and 'Lys-36' (H3K36) of histone H3 to produce respectively trimethylated 'Lys-4' (H3K4me3) and trimethylated 'Lys-36' (H3K36me3) histone H3 and plays a key role in meiotic prophase by determining hotspot localization thereby promoting meiotic recombination. Can also methylate all four core histones with H3 being the best substrate and the most highly modified. Is also able, on one hand, to mono and di-methylate H4K20 and on other hand to trimethylate H3K9 with the di-methylated H3K9 as the best substrate. During meiotic prophase, binds specific DNA sequences through its zinc finger domains thereby determining hotspot localization where it promotes local H3K4me3 and H3K36me3 enrichment on the same nucleosomes through its histone methyltransferase activity. Thereby promotes double-stranded breaks (DSB) formation, at this subset of PRDM9-binding sites, that initiates meiotic recombination for the proper meiotic progression. During meiotic progression hotspot-bound PRDM9 interacts with several complexes; in early leptonema binds CDYL and EHMT2 followed by EWSR1 and CXXC1 by the end of leptonema. EWSR1 joins PRDM9 with the chromosomal axis through REC8. In this way, controls the DSB repair pathway, pairing of homologous chromosomes and sex body formation. Moreover plays a central role in the transcriptional activation of genes during early meiotic prophase thanks to H3K4me3 and H3K36me3 enrichment that represents a specific tag for epigenetic transcriptional activation. In addition performs automethylation. Acetylation and phosphorylation of histone H3 attenuate or prevent histone H3 methylation. The protein is Histone-lysine N-methyltransferase PRDM9 of Rattus norvegicus (Rat).